The primary structure comprises 1635 residues: Cortactin-binding protein 2 (1635 aa).

Disordered regions lie at residues 1-20 (MATA…ARTS), 193-219 (ASKL…KSSQ), 264-469 (EQLR…DNLV), and 483-582 (SRFT…PHGI). Residues 116–273 (RKMQERMSAQ…EQLRKGNDHK (158 aa)) adopt a coiled-coil conformation. 2 stretches are compositionally biased toward basic and acidic residues: residues 193–205 (ASKL…KTGE) and 264–274 (EQLRKGNDHKP). 2 stretches are compositionally biased toward low complexity: residues 320–331 (PPVAVPAKPSSA) and 375–395 (GPSS…LLNN). Polar residues predominate over residues 402 to 414 (SQNHSLTSSTPNL). Residues 439–453 (QGNANDQDQNGNTTQ) show a composition bias toward low complexity. Residues 454-466 (SPPSREVSPTSRD) show a composition bias toward polar residues. At R484 the chain carries Asymmetric dimethylarginine. ANK repeat units follow at residues 697-727 (GRPT…DINH), 731-760 (DGSS…QVDD), 764-793 (NGFT…DINH), 797-826 (GGQT…DRSI), 830-859 (DGWT…PESE), and 893-923 (EGWT…EAER). A disordered region spans residues 856–876 (PESENSGSKDQTGLGSREESR). Positions 858–869 (SENSGSKDQTGL) are enriched in polar residues. Residues 1420–1469 (SHRKKGESGSWRKVNTSPRKKSGLSSSQTWTKQEATKDGVRNDTGHQNGN) are disordered. A compositionally biased stretch (polar residues) spans 1432 to 1452 (KVNTSPRKKSGLSSSQTWTKQ). Residues 1453–1463 (EATKDGVRNDT) show a composition bias toward basic and acidic residues. S1498 carries the phosphoserine modification. The interval 1531-1624 (RMFGSSRTDP…RQREINNNLK (94 aa)) is disordered. Composition is skewed to polar residues over residues 1546–1555 (PTMSDRSLPS) and 1563–1577 (LSSN…NTPK). A compositionally biased stretch (basic and acidic residues) spans 1615–1624 (RQREINNNLK).

Interacts with CTTN/cortactin SH3 domain. Interacts with STRN, STRN4/zinedin and MOB4/phocein; this interactions mediate the association with the STRIPAK core complex and may regulate dendritic spine distribution of the STRIPAK complex in hippocampal neurons. Activation of glutamate receptors weakens the interaction with STRN and STRN4.

The protein resides in the cytoplasm. It localises to the cell cortex. The protein localises to the cell projection. Its subcellular location is the dendritic spine. Its function is as follows. Regulates the dendritic spine distribution of CTTN/cortactin in hippocampal neurons, and thus controls dendritic spinogenesis and dendritic spine maintenance. Associates with the striatin-interacting phosphatase and kinase (STRIPAK) core complex to regulate dendritic spine distribution of the STRIPAK complex in hippocampal neurons. The protein is Cortactin-binding protein 2 (CTTNBP2) of Ornithorhynchus anatinus (Duckbill platypus).